The primary structure comprises 637 residues: Chaperone protein DnaK (637 aa).

Residue T198 is modified to Phosphothreonine; by autocatalysis. The segment at 597-637 is disordered; sequence MYQQAAQESGQTEGAAQDPKGAAQDDDVVDADFEEVKDHKK. Residues 600 to 610 are compositionally biased toward polar residues; sequence QAAQESGQTEG. A compositionally biased stretch (acidic residues) spans 620-629; it reads QDDDVVDADF.

It belongs to the heat shock protein 70 family.

Acts as a chaperone. In Desulforapulum autotrophicum (strain ATCC 43914 / DSM 3382 / VKM B-1955 / HRM2) (Desulfobacterium autotrophicum), this protein is Chaperone protein DnaK.